The primary structure comprises 218 residues: Large ribosomal subunit protein uL3 (218 aa).

The protein belongs to the universal ribosomal protein uL3 family. As to quaternary structure, part of the 50S ribosomal subunit. Forms a cluster with proteins L14 and L19.

In terms of biological role, one of the primary rRNA binding proteins, it binds directly near the 3'-end of the 23S rRNA, where it nucleates assembly of the 50S subunit. In Syntrophus aciditrophicus (strain SB), this protein is Large ribosomal subunit protein uL3.